A 586-amino-acid chain; its full sequence is DNA-directed RNA polymerase subunit beta' (586 aa).

Zn(2+) is bound by residues Cys64, Cys66, Cys85, and Cys88. The Mg(2+) site is built by Asp448, Asp450, and Asp452.

The protein belongs to the RNA polymerase beta' chain family. RpoC1 subfamily. In plastids the minimal PEP RNA polymerase catalytic core is composed of four subunits: alpha, beta, beta', and beta''. When a (nuclear-encoded) sigma factor is associated with the core the holoenzyme is formed, which can initiate transcription. The cofactor is Mg(2+). Zn(2+) is required as a cofactor.

Its subcellular location is the plastid. It localises to the chloroplast. It carries out the reaction RNA(n) + a ribonucleoside 5'-triphosphate = RNA(n+1) + diphosphate. Functionally, DNA-dependent RNA polymerase catalyzes the transcription of DNA into RNA using the four ribonucleoside triphosphates as substrates. The sequence is that of DNA-directed RNA polymerase subunit beta' from Euglena gracilis.